Here is a 450-residue protein sequence, read N- to C-terminus: Phosphoglucosamine mutase (450 aa).

Ser-102 acts as the Phosphoserine intermediate in catalysis. Mg(2+) contacts are provided by Ser-102, Asp-244, Asp-246, and Asp-248. Ser-102 is subject to Phosphoserine.

It belongs to the phosphohexose mutase family. Requires Mg(2+) as cofactor. Activated by phosphorylation.

It catalyses the reaction alpha-D-glucosamine 1-phosphate = D-glucosamine 6-phosphate. Catalyzes the conversion of glucosamine-6-phosphate to glucosamine-1-phosphate. The protein is Phosphoglucosamine mutase of Solidesulfovibrio magneticus (strain ATCC 700980 / DSM 13731 / RS-1) (Desulfovibrio magneticus).